A 429-amino-acid polypeptide reads, in one-letter code: Nucleotide exchange factor Sil1 (429 aa).

Positions 1–24 (MSGKQVVILLGSVLILGCLQVAAA) are cleaved as a signal peptide. Asn29 is a glycosylation site (N-linked (GlcNAc...) asparagine). The tract at residues 70–98 (DESERGTSLQSQPDDQNARESHDDNEPLA) is disordered. Polar residues predominate over residues 75-84 (GTSLQSQPDD). A compositionally biased stretch (basic and acidic residues) spans 85 to 94 (QNARESHDDN). Positions 104–135 (DIIEESIRRVKEQKKSYAELRKAYKEFQKNFR) form a coiled coil. N-linked (GlcNAc...) asparagine glycans are attached at residues Asn150, Asn199, and Asn400. Positions 426–429 (HTEL) match the Prevents secretion from ER motif.

It belongs to the SIL1 family.

It is found in the endoplasmic reticulum lumen. Required for protein translocation and folding in the endoplasmic reticulum (ER). Functions as a nucleotide exchange factor for an ER lumenal chaperone of HSP70 family. This chain is Nucleotide exchange factor Sil1, found in Drosophila melanogaster (Fruit fly).